A 664-amino-acid chain; its full sequence is Intraflagellar transport protein 70A (664 aa).

TPR repeat units lie at residues 11 to 44 (DGEF…SPRS), 45 to 78 (RAGL…HPEL), 153 to 186 (LDGQ…SGYR), 188 to 220 (DLSY…GIRQ), 392 to 423 (LTKQ…EKYI), 424 to 456 (PVLM…CNDH), and 458 to 491 (VWKL…HYDN). Residues 507–534 (YIMTSQNEEAEELMRKIEKEEEQLSYDD) adopt a coiled-coil conformation. A TPR 8 repeat occupies 543–576 (CIVNLVIGTLYCAKGNYDFGISRVIKSLEPYNKK).

It belongs to the TTC30/dfy-1/fleer family.

The protein localises to the cell projection. It is found in the cilium. In terms of biological role, required for polyglutamylation of axonemal tubulin. Plays a role in anterograde intraflagellar transport (IFT), the process by which cilia precursors are transported from the base of the cilium to the site of their incorporation at the tip. The polypeptide is Intraflagellar transport protein 70A (IFT70A) (Bos taurus (Bovine)).